The following is a 330-amino-acid chain: Diacylglycerol acyltransferase/mycolyltransferase Ag85B (330 aa).

The N-terminal stretch at 1 to 40 (MTDLSEKVRAWGRRLLVGAAAAVTLPGLIGLAGGAATANA) is a signal peptide. 82-83 (LR) contributes to the substrate binding site. Residues 98-108 (FEWYYQSGLSV) are fibronectin-binding. A disulfide bond links Cys-127 and Cys-132. 2 residues coordinate substrate: Ser-166 and Asp-194. Catalysis depends on Ser-166, which acts as the Nucleophile. The active site involves Glu-270. Residues 272–275 (FVRS), Lys-279, and 302–304 (HSW) each bind substrate. His-302 is a catalytic residue.

The protein belongs to the mycobacterial A85 antigen family.

It localises to the secreted. It catalyses the reaction 2 alpha,alpha'-trehalose 6-mycolate = alpha,alpha'-trehalose 6,6'-bismycolate + alpha,alpha-trehalose. It carries out the reaction an acyl-CoA + a 1,2-diacyl-sn-glycerol = a triacyl-sn-glycerol + CoA. The antigen 85 proteins (FbpA, FbpB, FbpC) are responsible for the high affinity of mycobacteria for fibronectin, a large adhesive glycoprotein, which facilitates the attachment of M.tuberculosis to murine alveolar macrophages (AMs). They also help to maintain the integrity of the cell wall by catalyzing the transfer of mycolic acids to cell wall arabinogalactan and through the synthesis of alpha,alpha-trehalose dimycolate (TDM, cord factor). They catalyze the transfer of a mycoloyl residue from one molecule of alpha,alpha-trehalose monomycolate (TMM) to another TMM, leading to the formation of TDM. The protein is Diacylglycerol acyltransferase/mycolyltransferase Ag85B (fbpB) of Mycobacterium avium.